The primary structure comprises 293 residues: N-acetylmannosamine kinase (293 aa).

ATP is bound by residues 5–12 (AIDIGGTK) and 133–140 (GVGGGLVI). Zn(2+) is bound by residues His157, Cys167, Cys169, and Cys174.

Belongs to the ROK (NagC/XylR) family. NanK subfamily. In terms of assembly, homodimer.

It carries out the reaction an N-acyl-D-mannosamine + ATP = an N-acyl-D-mannosamine 6-phosphate + ADP + H(+). The protein operates within amino-sugar metabolism; N-acetylneuraminate degradation; D-fructose 6-phosphate from N-acetylneuraminate: step 2/5. Functionally, catalyzes the phosphorylation of N-acetylmannosamine (ManNAc) to ManNAc-6-P. This Vibrio vulnificus (strain YJ016) protein is N-acetylmannosamine kinase.